A 402-amino-acid polypeptide reads, in one-letter code: Putative RNA-guided DNA endonuclease (402 aa).

Asp188 is a catalytic residue. The segment at 202-239 (KITNPKHERRDRARLAKAQRDVSRKAKGSANRKKARRK) is disordered. Residues 204–225 (TNPKHERRDRARLAKAQRDVSR) show a composition bias toward basic and acidic residues. The span at 226–239 (KAKGSANRKKARRK) shows a compositional bias: basic residues. Glu272 is a catalytic residue. Residues Cys325, Cys328, Cys344, and Cys346 each contribute to the Zn(2+) site. Asp353 is a catalytic residue. A disordered region spans residues 373–402 (GIRPQRESSRTGRSSVKQEPQRATAGIPRL).

The protein in the N-terminal section; belongs to the transposase 2 family. This sequence in the C-terminal section; belongs to the transposase 35 family.

An RNA-guided dsDNA endonuclease. When guided by an RNA derived from the right-end element of its insertion sequence element (IS), cleaves DNA downstream of the transposon-associated motif (TAM). Cleaves supercoiled and linear DNA in a staggered manner 15-21 bases from the TAM yielding 5'-overhangs. Binds reRNA, an approximately 150 nucleotide base sRNA derived from the 3' end of its own gene, the right end (RE) of the insertion sequence (IS) plus sequence downstream of the IS. The chain is Putative RNA-guided DNA endonuclease from Streptomyces pristinaespiralis.